We begin with the raw amino-acid sequence, 189 residues long: dCTP deaminase (189 aa).

DCTP is bound by residues 112–117, 136–138, Gln-157, Tyr-171, and Gln-181; these read KSTYAR and TLE. Glu-138 functions as the Proton donor/acceptor in the catalytic mechanism.

The protein belongs to the dCTP deaminase family. As to quaternary structure, homotrimer.

It carries out the reaction dCTP + H2O + H(+) = dUTP + NH4(+). It participates in pyrimidine metabolism; dUMP biosynthesis; dUMP from dCTP (dUTP route): step 1/2. Its function is as follows. Catalyzes the deamination of dCTP to dUTP. This is dCTP deaminase from Xanthomonas campestris pv. campestris (strain 8004).